The chain runs to 444 residues: Phosphoglucosamine mutase (444 aa).

The active-site Phosphoserine intermediate is the serine 100. The Mg(2+) site is built by serine 100, aspartate 240, aspartate 242, and aspartate 244. Position 100 is a phosphoserine (serine 100).

Belongs to the phosphohexose mutase family. It depends on Mg(2+) as a cofactor. Post-translationally, activated by phosphorylation.

It carries out the reaction alpha-D-glucosamine 1-phosphate = D-glucosamine 6-phosphate. Functionally, catalyzes the conversion of glucosamine-6-phosphate to glucosamine-1-phosphate. This chain is Phosphoglucosamine mutase, found in Desulforamulus reducens (strain ATCC BAA-1160 / DSM 100696 / MI-1) (Desulfotomaculum reducens).